Reading from the N-terminus, the 359-residue chain is Spermine synthase (359 aa).

Residues serine 53–threonine 304 form the PABS domain. Glutamine 99 lines the S-adenosyl 3-(methylsulfanyl)propylamine pocket. Tyrosine 129 is a spermidine binding site. Position 130 (glutamine 130) interacts with S-adenosyl 3-(methylsulfanyl)propylamine. Spermidine is bound at residue aspartate 154. S-adenosyl 3-(methylsulfanyl)propylamine-binding positions include glutamate 174 and aspartate 205–alanine 206. Aspartate 224 functions as the Proton acceptor in the catalytic mechanism. Tyrosine 292 contributes to the putrescine binding site.

It belongs to the spermidine/spermine synthase family. Heterodimer. Component of a multiprotein complex. Interacts with SPDSYN1 and SPDSYN2. Expressed predominantly in stem internodes, flower buds and roots.

The enzyme catalyses S-adenosyl 3-(methylsulfanyl)propylamine + spermidine = spermine + S-methyl-5'-thioadenosine + H(+). The protein operates within amine and polyamine biosynthesis; spermine biosynthesis; spermine from spermidine: step 1/1. This Arabidopsis thaliana (Mouse-ear cress) protein is Spermine synthase (SPMS).